The following is a 168-amino-acid chain: Endoribonuclease YbeY (168 aa).

3 residues coordinate Zn(2+): histidine 123, histidine 127, and histidine 133.

The protein belongs to the endoribonuclease YbeY family. It depends on Zn(2+) as a cofactor.

Its subcellular location is the cytoplasm. Single strand-specific metallo-endoribonuclease involved in late-stage 70S ribosome quality control and in maturation of the 3' terminus of the 16S rRNA. In Francisella tularensis subsp. holarctica (strain LVS), this protein is Endoribonuclease YbeY.